Reading from the N-terminus, the 83-residue chain is Sec-independent protein translocase protein TatA (83 aa).

A helical transmembrane segment spans residues 2–22 (GLGGISIWQLLIVLVIVLLLF). Basic and acidic residues-rich tracts occupy residues 50–65 (AAKQ…KVAA) and 74–83 (AEQKEKTEAK). Positions 50–83 (AAKQEAEEAEQKKVAAEEAAAAKTAEQKEKTEAK) are disordered.

Belongs to the TatA/E family. As to quaternary structure, the Tat system comprises two distinct complexes: a TatABC complex, containing multiple copies of TatA, TatB and TatC subunits, and a separate TatA complex, containing only TatA subunits. Substrates initially bind to the TatABC complex, which probably triggers association of the separate TatA complex to form the active translocon.

The protein resides in the cell inner membrane. In terms of biological role, part of the twin-arginine translocation (Tat) system that transports large folded proteins containing a characteristic twin-arginine motif in their signal peptide across membranes. TatA could form the protein-conducting channel of the Tat system. The polypeptide is Sec-independent protein translocase protein TatA (Saccharophagus degradans (strain 2-40 / ATCC 43961 / DSM 17024)).